Here is a 487-residue protein sequence, read N- to C-terminus: Ribulose bisphosphate carboxylase large chain (487 aa).

Substrate-binding residues include asparagine 127 and threonine 177. Residue lysine 179 is the Proton acceptor of the active site. Lysine 181 is a substrate binding site. Positions 205, 207, and 208 each coordinate Mg(2+). N6-carboxylysine is present on lysine 205. The Proton acceptor role is filled by histidine 297. Substrate-binding residues include arginine 298, histidine 330, and serine 382.

The protein belongs to the RuBisCO large chain family. Type I subfamily. Heterohexadecamer of 8 large chains and 8 small chains. Requires Mg(2+) as cofactor.

It carries out the reaction 2 (2R)-3-phosphoglycerate + 2 H(+) = D-ribulose 1,5-bisphosphate + CO2 + H2O. It catalyses the reaction D-ribulose 1,5-bisphosphate + O2 = 2-phosphoglycolate + (2R)-3-phosphoglycerate + 2 H(+). Its function is as follows. RuBisCO catalyzes two reactions: the carboxylation of D-ribulose 1,5-bisphosphate, the primary event in carbon dioxide fixation, as well as the oxidative fragmentation of the pentose substrate. Both reactions occur simultaneously and in competition at the same active site. This chain is Ribulose bisphosphate carboxylase large chain, found in Paracoccus denitrificans (strain Pd 1222).